The chain runs to 329 residues: DNA-directed RNA polymerase subunit alpha (329 aa).

Residues 1 to 234 (MQGSVTEFLK…EQLDAFVELR (234 aa)) are alpha N-terminal domain (alpha-NTD). The interval 248-329 (FDPILLRPVD…WPPASLVDDL (82 aa)) is alpha C-terminal domain (alpha-CTD).

This sequence belongs to the RNA polymerase alpha chain family. Homodimer. The RNAP catalytic core consists of 2 alpha, 1 beta, 1 beta' and 1 omega subunit. When a sigma factor is associated with the core the holoenzyme is formed, which can initiate transcription.

It catalyses the reaction RNA(n) + a ribonucleoside 5'-triphosphate = RNA(n+1) + diphosphate. Functionally, DNA-dependent RNA polymerase catalyzes the transcription of DNA into RNA using the four ribonucleoside triphosphates as substrates. This Shewanella denitrificans (strain OS217 / ATCC BAA-1090 / DSM 15013) protein is DNA-directed RNA polymerase subunit alpha.